Consider the following 368-residue polypeptide: Phosphate acyltransferase (368 aa).

This sequence belongs to the PlsX family. Homodimer. Probably interacts with PlsY.

The protein localises to the cytoplasm. It catalyses the reaction a fatty acyl-[ACP] + phosphate = an acyl phosphate + holo-[ACP]. The protein operates within lipid metabolism; phospholipid metabolism. In terms of biological role, catalyzes the reversible formation of acyl-phosphate (acyl-PO(4)) from acyl-[acyl-carrier-protein] (acyl-ACP). This enzyme utilizes acyl-ACP as fatty acyl donor, but not acyl-CoA. This is Phosphate acyltransferase from Cereibacter sphaeroides (strain ATCC 17025 / ATH 2.4.3) (Rhodobacter sphaeroides).